The following is a 121-amino-acid chain: Ribonuclease P protein component 4 (121 aa).

Zn(2+)-binding residues include cysteine 63, cysteine 66, cysteine 89, and cysteine 92.

This sequence belongs to the eukaryotic/archaeal RNase P protein component 4 family. As to quaternary structure, consists of a catalytic RNA component and at least 4-5 protein subunits. Zn(2+) serves as cofactor.

It localises to the cytoplasm. It catalyses the reaction Endonucleolytic cleavage of RNA, removing 5'-extranucleotides from tRNA precursor.. Its function is as follows. Part of ribonuclease P, a protein complex that generates mature tRNA molecules by cleaving their 5'-ends. This Methanobrevibacter smithii (strain ATCC 35061 / DSM 861 / OCM 144 / PS) protein is Ribonuclease P protein component 4.